The chain runs to 166 residues: Endoribonuclease YbeY (166 aa).

The Zn(2+) site is built by histidine 111, histidine 115, and histidine 121. The tract at residues 140–166 (ELGYPDPYADDESADPPHSDTPSKDHE) is disordered. Over residues 154-166 (DPPHSDTPSKDHE) the composition is skewed to basic and acidic residues.

This sequence belongs to the endoribonuclease YbeY family. Zn(2+) serves as cofactor.

The protein resides in the cytoplasm. Functionally, single strand-specific metallo-endoribonuclease involved in late-stage 70S ribosome quality control and in maturation of the 3' terminus of the 16S rRNA. This Pseudomonas syringae pv. syringae (strain B728a) protein is Endoribonuclease YbeY.